The primary structure comprises 179 residues: Ribosome maturation factor RimM (179 aa).

The 80-residue stretch at 95–174 (KDEFFYFDIL…QIFCTQDAFL (80 aa)) folds into the PRC barrel domain.

This sequence belongs to the RimM family. As to quaternary structure, binds ribosomal protein uS19.

It is found in the cytoplasm. In terms of biological role, an accessory protein needed during the final step in the assembly of 30S ribosomal subunit, possibly for assembly of the head region. Essential for efficient processing of 16S rRNA. May be needed both before and after RbfA during the maturation of 16S rRNA. It has affinity for free ribosomal 30S subunits but not for 70S ribosomes. In Campylobacter jejuni subsp. jejuni serotype O:2 (strain ATCC 700819 / NCTC 11168), this protein is Ribosome maturation factor RimM.